The sequence spans 1378 residues: Cell surface hyaluronidase (1378 aa).

Residues 1 to 77 form a disordered region; that stretch reads MQVNDGPSSH…GNRREQAQNQ (77 aa). The Cytoplasmic segment spans residues 1 to 82; that stretch reads MQVNDGPSSH…QAQNQQRKNT (82 aa). Over residues 36-58 the composition is skewed to pro residues; sequence RSPPPAKAPPPPPLKPPVPPPAR. A helical; Signal-anchor for type II membrane protein transmembrane segment spans residues 83–103; the sequence is YICVGIFFGIFLLILILVLSL. The Extracellular portion of the chain corresponds to 104-1378; it reads TSKDVLDENC…MDLELLKKIS (1275 aa). One can recognise a G8 domain in the interval 121–247; that stretch reads RSWKPGHDLK…ERMSWTFLTR (127 aa). N-linked (GlcNAc...) asparagine glycosylation is found at asparagine 171, asparagine 264, asparagine 360, asparagine 527, and asparagine 639. Residues 257–414 form the GG-type lectin 1 domain; it reads GDHAFQKNFS…YPTTGFQVDA (158 aa). The PbH1 1 repeat unit spans residues 672–694; that stretch reads HPNNHLISNSAAGSQDAGIWYVF. Residue asparagine 696 is glycosylated (N-linked (GlcNAc...) asparagine). The PbH1 2 repeat unit spans residues 714–736; it reads TPLGTFFNNRVHSNFKAGLFIDR. N-linked (GlcNAc...) asparagine glycosylation is found at asparagine 742, asparagine 854, asparagine 905, asparagine 996, asparagine 1069, asparagine 1160, and asparagine 1221. The 161-residue stretch at 1203–1363 folds into the GG-type lectin 2 domain; the sequence is NSYLQTQIKS…LEEYSCPPKK (161 aa).

Belongs to the CEMIP family. The cofactor is Ca(2+).

The protein resides in the cell membrane. The enzyme catalyses Random hydrolysis of (1-&gt;4)-linkages between N-acetyl-beta-D-glucosamine and D-glucuronate residues in hyaluronate.. Cell surface hyaluronidase that mediates the initial cleavage of extracellular high-molecular-weight hyaluronan into intermediate-size hyaluronan. Acts as a regulator of angiogenesis in embryos by mediating degradation of extracellular hyaluronan, thereby promoting VEGF signaling. Acts as a regulator of heart development during myocardial and endocardial morphogenesis: involved in the looping stage of heart morphogenesis. Stimulates migration of endocardial cells and increases both myocardial and endocardial fusion. Involved in the restriction of endocardial cushions (ECs) formation to the atrioventricular canal (AVC). Also required for muscle fiber attachment. Is very specific to hyaluronan; not able to cleave chondroitin sulfate or dermatan sulfate. The chain is Cell surface hyaluronidase (cemip2) from Danio rerio (Zebrafish).